The following is a 199-amino-acid chain: ATP-dependent Clp protease proteolytic subunit (199 aa).

Ser97 functions as the Nucleophile in the catalytic mechanism. Residue His122 is part of the active site.

It belongs to the peptidase S14 family. Fourteen ClpP subunits assemble into 2 heptameric rings which stack back to back to give a disk-like structure with a central cavity, resembling the structure of eukaryotic proteasomes.

Its subcellular location is the cytoplasm. The catalysed reaction is Hydrolysis of proteins to small peptides in the presence of ATP and magnesium. alpha-casein is the usual test substrate. In the absence of ATP, only oligopeptides shorter than five residues are hydrolyzed (such as succinyl-Leu-Tyr-|-NHMec, and Leu-Tyr-Leu-|-Tyr-Trp, in which cleavage of the -Tyr-|-Leu- and -Tyr-|-Trp bonds also occurs).. Cleaves peptides in various proteins in a process that requires ATP hydrolysis. Has a chymotrypsin-like activity. Plays a major role in the degradation of misfolded proteins. The protein is ATP-dependent Clp protease proteolytic subunit of Geobacter sulfurreducens (strain ATCC 51573 / DSM 12127 / PCA).